Here is a 117-residue protein sequence, read N- to C-terminus: Ribonuclease P protein component (117 aa).

It belongs to the RnpA family. As to quaternary structure, consists of a catalytic RNA component (M1 or rnpB) and a protein subunit.

The catalysed reaction is Endonucleolytic cleavage of RNA, removing 5'-extranucleotides from tRNA precursor.. RNaseP catalyzes the removal of the 5'-leader sequence from pre-tRNA to produce the mature 5'-terminus. It can also cleave other RNA substrates such as 4.5S RNA. The protein component plays an auxiliary but essential role in vivo by binding to the 5'-leader sequence and broadening the substrate specificity of the ribozyme. The protein is Ribonuclease P protein component of Thermotoga sp. (strain RQ2).